We begin with the raw amino-acid sequence, 297 residues long: Probable terminal-alkyne amino-acid exporter (297 aa).

9 helical membrane passes run 6–26 (AVWALVLTVVTWASAFPAIRV), 32–52 (GVAGLSLSRLTVASVALAIAA), 65–85 (LPMIALCGATGMSAYQVLLNW), 95–115 (ASLLIAIAPVFSVLLAAVFLG), 123–143 (IAGSAVAISGAAVIAVAGGHA), 150–170 (WVVLAAAVVQGVYHFATKPLL), 178–198 (VACYAMWAGTVFLLPLLPAMV), 212–232 (TVYLGLLPSAIGFVSWGYAVA), and 249–269 (VALVVAFVWLGEVPPPLALVG). EamA domains follow at residues 6–137 (AVWA…AVIA) and 150–281 (WVVL…MLIN).

The protein belongs to the EamA transporter family.

It is found in the cell membrane. Probably involved in the export of terminal alkyne-containing amino acids, namely L-propargylglycine (Pra) and L-beta-ethynylserine, that are antibiotics synthesized by enzymes encoded in the same gene cluster. The protein is Probable terminal-alkyne amino-acid exporter of Streptantibioticus cattleyicolor (strain ATCC 35852 / DSM 46488 / JCM 4925 / NBRC 14057 / NRRL 8057) (Streptomyces cattleya).